Here is a 497-residue protein sequence, read N- to C-terminus: Guanosine-5'-triphosphate,3'-diphosphate pyrophosphatase (497 aa).

This sequence belongs to the GppA/Ppx family. GppA subfamily.

It catalyses the reaction guanosine 3'-diphosphate 5'-triphosphate + H2O = guanosine 3',5'-bis(diphosphate) + phosphate + H(+). It participates in purine metabolism; ppGpp biosynthesis; ppGpp from GTP: step 2/2. Its function is as follows. Catalyzes the conversion of pppGpp to ppGpp. Guanosine pentaphosphate (pppGpp) is a cytoplasmic signaling molecule which together with ppGpp controls the 'stringent response', an adaptive process that allows bacteria to respond to amino acid starvation, resulting in the coordinated regulation of numerous cellular activities. In Vibrio vulnificus (strain YJ016), this protein is Guanosine-5'-triphosphate,3'-diphosphate pyrophosphatase.